The chain runs to 518 residues: Hyccin (518 aa).

2 disordered regions span residues 385 to 410 (GLRR…MDQL) and 466 to 492 (VFSG…EGVA). The span at 393–403 (SSKEKDKEKDA) shows a compositional bias: basic and acidic residues. The span at 466-484 (VFSGNQPSSRASSPTSNHV) shows a compositional bias: polar residues.

It belongs to the Hyccin family. In terms of assembly, component of a phosphatidylinositol 4-kinase (PI4K) complex.

Its subcellular location is the cytoplasm. The protein resides in the cytosol. The protein localises to the cell membrane. In terms of biological role, component of a complex required to localize phosphatidylinositol 4-kinase (PI4K) to the plasma membrane. The complex acts as a regulator of phosphatidylinositol 4-phosphate (PtdIns(4)P) synthesis. In Danio rerio (Zebrafish), this protein is Hyccin (hycc1).